A 111-amino-acid polypeptide reads, in one-letter code: Large ribosomal subunit protein uL22 (111 aa).

It belongs to the universal ribosomal protein uL22 family. Part of the 50S ribosomal subunit.

Its function is as follows. This protein binds specifically to 23S rRNA; its binding is stimulated by other ribosomal proteins, e.g. L4, L17, and L20. It is important during the early stages of 50S assembly. It makes multiple contacts with different domains of the 23S rRNA in the assembled 50S subunit and ribosome. The globular domain of the protein is located near the polypeptide exit tunnel on the outside of the subunit, while an extended beta-hairpin is found that lines the wall of the exit tunnel in the center of the 70S ribosome. In Alkalilimnicola ehrlichii (strain ATCC BAA-1101 / DSM 17681 / MLHE-1), this protein is Large ribosomal subunit protein uL22.